The sequence spans 490 residues: Acetyl-coenzyme A carboxylase carboxyl transferase subunit beta, chloroplastic (490 aa).

In terms of domain architecture, CoA carboxyltransferase N-terminal spans 228–490; that stretch reads LWVQCENCYG…FKLHAFFPLN (263 aa). Positions 232, 235, 251, and 254 each coordinate Zn(2+). A C4-type zinc finger spans residues 232 to 254; the sequence is CENCYGLNYKKLLKSKMNICDQC.

The protein belongs to the AccD/PCCB family. Acetyl-CoA carboxylase is a heterohexamer composed of biotin carboxyl carrier protein, biotin carboxylase and 2 subunits each of ACCase subunit alpha and ACCase plastid-coded subunit beta (accD). It depends on Zn(2+) as a cofactor.

Its subcellular location is the plastid. It localises to the chloroplast stroma. The enzyme catalyses N(6)-carboxybiotinyl-L-lysyl-[protein] + acetyl-CoA = N(6)-biotinyl-L-lysyl-[protein] + malonyl-CoA. The protein operates within lipid metabolism; malonyl-CoA biosynthesis; malonyl-CoA from acetyl-CoA: step 1/1. In terms of biological role, component of the acetyl coenzyme A carboxylase (ACC) complex. Biotin carboxylase (BC) catalyzes the carboxylation of biotin on its carrier protein (BCCP) and then the CO(2) group is transferred by the transcarboxylase to acetyl-CoA to form malonyl-CoA. The sequence is that of Acetyl-coenzyme A carboxylase carboxyl transferase subunit beta, chloroplastic from Eucalyptus globulus subsp. globulus (Tasmanian blue gum).